The following is a 375-amino-acid chain: Putative F-box/kelch-repeat protein At3g24610 (375 aa).

Residues 1–27 (MSNEAPEVEPHSKRRKKEASPSSSSGF) form a disordered region. The region spanning 25–71 (SGFLQSLPEAVAMICLARVSRLDHAALSLVSKSCRSMVLSPELYQTR) is the F-box domain. Residues 138–183 (KINVWGGCKYKHYYDWGEVFDPKTQTWADMSIPKPVREEKIYVVDS) form a Kelch repeat.

This is Putative F-box/kelch-repeat protein At3g24610 from Arabidopsis thaliana (Mouse-ear cress).